Here is a 311-residue protein sequence, read N- to C-terminus: Malate dehydrogenase (311 aa).

NAD(+) is bound by residues 7-13 (GAAGGIG) and Asp-34. Arg-81 and Arg-87 together coordinate substrate. Residues Asn-94 and 117-119 (ITN) contribute to the NAD(+) site. 2 residues coordinate substrate: Asn-119 and Arg-153. His-177 functions as the Proton acceptor in the catalytic mechanism. Met-227 serves as a coordination point for NAD(+).

This sequence belongs to the LDH/MDH superfamily. MDH type 1 family. As to quaternary structure, homodimer.

It catalyses the reaction (S)-malate + NAD(+) = oxaloacetate + NADH + H(+). Catalyzes the reversible oxidation of malate to oxaloacetate. The protein is Malate dehydrogenase of Shewanella sp. (strain MR-4).